The sequence spans 258 residues: Indole-3-glycerol phosphate synthase (258 aa).

This sequence belongs to the TrpC family.

It catalyses the reaction 1-(2-carboxyphenylamino)-1-deoxy-D-ribulose 5-phosphate + H(+) = (1S,2R)-1-C-(indol-3-yl)glycerol 3-phosphate + CO2 + H2O. Its pathway is amino-acid biosynthesis; L-tryptophan biosynthesis; L-tryptophan from chorismate: step 4/5. This Campylobacter jejuni (strain RM1221) protein is Indole-3-glycerol phosphate synthase.